A 212-amino-acid polypeptide reads, in one-letter code: Ribonuclease HII (212 aa).

The 195-residue stretch at 17 to 211 (RVLAGIDEAG…VLELLDLTDS (195 aa)) folds into the RNase H type-2 domain. Residues D23, E24, and D120 each coordinate a divalent metal cation.

This sequence belongs to the RNase HII family. It depends on Mn(2+) as a cofactor. Requires Mg(2+) as cofactor.

It is found in the cytoplasm. The catalysed reaction is Endonucleolytic cleavage to 5'-phosphomonoester.. Its function is as follows. Endonuclease that specifically degrades the RNA of RNA-DNA hybrids. This is Ribonuclease HII from Chloroflexus aggregans (strain MD-66 / DSM 9485).